A 224-amino-acid polypeptide reads, in one-letter code: Probable GTP-binding protein EngB (224 aa).

In terms of domain architecture, EngB-type G spans 31 to 205; it reads IGVEIAFAGR…LSILNDWCHP (175 aa). GTP is bound by residues 39 to 46, 66 to 70, 84 to 87, 151 to 154, and 184 to 186; these read GRSNAGKS, GRTQL, DLPG, TKSD, and LSS. Residues serine 46 and threonine 68 each contribute to the Mg(2+) site.

The protein belongs to the TRAFAC class TrmE-Era-EngA-EngB-Septin-like GTPase superfamily. EngB GTPase family. Requires Mg(2+) as cofactor.

In terms of biological role, necessary for normal cell division and for the maintenance of normal septation. The sequence is that of Probable GTP-binding protein EngB from Shewanella frigidimarina (strain NCIMB 400).